Consider the following 262-residue polypeptide: Vibriobactin-specific 2,3-dihydro-2,3-dihydroxybenzoate dehydrogenase (262 aa).

Residue 12–36 participates in NAD(+) binding; that stretch reads LLVGSARGIGFSVLEHLLQAGAQVM. Ser145 is a binding site for substrate. Tyr158 functions as the Proton acceptor in the catalytic mechanism.

Belongs to the short-chain dehydrogenases/reductases (SDR) family.

The catalysed reaction is (2S,3S)-2,3-dihydroxy-2,3-dihydrobenzoate + NAD(+) = 2,3-dihydroxybenzoate + NADH + H(+). It functions in the pathway siderophore biosynthesis; vibriobactin biosynthesis. Functionally, involved in an early step of the biosynthesis of the catechol siderophore vibriobactin. Vibriobactin is a chelating compound involved in transporting iron from the bacterial environment into the cell cytoplasm. This Vibrio cholerae serotype O1 (strain ATCC 39315 / El Tor Inaba N16961) protein is Vibriobactin-specific 2,3-dihydro-2,3-dihydroxybenzoate dehydrogenase (vibA).